A 464-amino-acid polypeptide reads, in one-letter code: L-cystine uptake protein TcyP (464 aa).

10 helical membrane-spanning segments follow: residues 3–23, 34–54, 73–93, 107–127, 184–204, 225–245, 263–283, 347–367, 371–391, and 395–415; these read TLLV…LYYM, VFTA…IYEP, YVKL…ISAF, GLII…GIAA, PTST…FIGV, IVMR…LALM, FVLA…LLIA, AGIY…IDPL, FILT…GVGG, and FAAL…ALVI.

The protein belongs to the dicarboxylate/amino acid:cation symporter (DAACS) (TC 2.A.23) family.

It localises to the membrane. Its function is as follows. Mediates uptake of L-cystine, the oxidized form of L-cysteine. This is L-cystine uptake protein TcyP from Bacillus thuringiensis (strain Al Hakam).